The primary structure comprises 363 residues: Glutamate 5-kinase (363 aa).

Lys3 lines the ATP pocket. 3 residues coordinate substrate: Ser43, Asp128, and Asn140. Residues 160–161 (TD) and 202–208 (TGGMRTK) each bind ATP. Residues 267–349 (AGAILIDDGA…REIENVLGYS (83 aa)) form the PUA domain.

It belongs to the glutamate 5-kinase family.

It is found in the cytoplasm. The enzyme catalyses L-glutamate + ATP = L-glutamyl 5-phosphate + ADP. The protein operates within amino-acid biosynthesis; L-proline biosynthesis; L-glutamate 5-semialdehyde from L-glutamate: step 1/2. Catalyzes the transfer of a phosphate group to glutamate to form L-glutamate 5-phosphate. The protein is Glutamate 5-kinase of Xanthomonas axonopodis pv. citri (strain 306).